The primary structure comprises 487 residues: MTTHYIAGNWQAGQGETLQSLNPVTQAVIWQGQGADASQVDAAVQAARQAFPAWAQLSLEARIDVLEKFAAQLKVHAEAMAQCIGEETGKPLWESATEVTSMINKVAISVQSYRERTGEKSGPLADATAVLRHKPHGVVAVFGPYNFPGHLPNGHIVPALLAGNCVVFKPSELTPKVAELTVNCWIAAGLPAGVLNLVQGARETGVALAANPGIDGLFFTGSSRTGNLLHQQFAGRPDKILALEMGGNNPLVVDEVKDLDAAVYTIIQSAFISAGQRCTCARRLLVPQGAWGDALIARLVEVCKTITVGAFDEQPAPFMGSVISLQAARALLAAQVELAAKGGVKLLEMTQPQADAALLTPGIVDVTAVADRPDEEFFGPLLQVIRYADFDAAIDEANNTQYGLAAGLLSDSRARYQYFWLRSRAGIVNWNKQLTGAASSAPFGGVGASGNHRASAYYAADYCAYPVASLETASLALPATLTPGVTL.

221–226 (GSSRTG) provides a ligand contact to NAD(+). Catalysis depends on residues E244 and C278.

It belongs to the aldehyde dehydrogenase family. AstD subfamily.

The enzyme catalyses N-succinyl-L-glutamate 5-semialdehyde + NAD(+) + H2O = N-succinyl-L-glutamate + NADH + 2 H(+). It participates in amino-acid degradation; L-arginine degradation via AST pathway; L-glutamate and succinate from L-arginine: step 4/5. Its function is as follows. Catalyzes the NAD-dependent reduction of succinylglutamate semialdehyde into succinylglutamate. This is N-succinylglutamate 5-semialdehyde dehydrogenase from Pseudomonas putida (strain ATCC 47054 / DSM 6125 / CFBP 8728 / NCIMB 11950 / KT2440).